Reading from the N-terminus, the 159-residue chain is ATP synthase subunit delta, mitochondrial (159 aa).

A mitochondrion-targeting transit peptide spans methionine 1–tyrosine 23.

Belongs to the ATPase epsilon chain family. As to quaternary structure, F-type ATPases have 2 components, CF(1) - the catalytic core - and CF(0) - the membrane proton channel. CF(1) has five subunits: alpha(3), beta(3), gamma(1), delta(1), epsilon(1). CF(0) has three main subunits: a, b and c.

It is found in the mitochondrion. The protein localises to the mitochondrion inner membrane. Mitochondrial membrane ATP synthase (F(1)F(0) ATP synthase or Complex V) produces ATP from ADP in the presence of a proton gradient across the membrane which is generated by electron transport complexes of the respiratory chain. F-type ATPases consist of two structural domains, F(1) - containing the extramembraneous catalytic core, and F(0) - containing the membrane proton channel, linked together by a central stalk and a peripheral stalk. During catalysis, ATP turnover in the catalytic domain of F(1) is coupled via a rotary mechanism of the central stalk subunits to proton translocation. Part of the complex F(1) domain and of the central stalk which is part of the complex rotary element. Rotation of the central stalk against the surrounding alpha(3)beta(3) subunits leads to hydrolysis of ATP in three separate catalytic sites on the beta subunits. In Kluyveromyces lactis (strain ATCC 8585 / CBS 2359 / DSM 70799 / NBRC 1267 / NRRL Y-1140 / WM37) (Yeast), this protein is ATP synthase subunit delta, mitochondrial (ATP16).